The following is a 185-amino-acid chain: Large ribosomal subunit protein uL22 (185 aa).

The segment at 160–185 (VSHDDSQKKKVSKKKLARQKEKMMRE) is disordered.

The protein belongs to the universal ribosomal protein uL22 family.

The chain is Large ribosomal subunit protein uL22 (RpL17) from Maconellicoccus hirsutus (Pink hibiscus mealybug).